Consider the following 203-residue polypeptide: Large ribosomal subunit protein bL25 (203 aa).

Belongs to the bacterial ribosomal protein bL25 family. CTC subfamily. As to quaternary structure, part of the 50S ribosomal subunit; part of the 5S rRNA/L5/L18/L25 subcomplex. Contacts the 5S rRNA. Binds to the 5S rRNA independently of L5 and L18.

Functionally, this is one of the proteins that binds to the 5S RNA in the ribosome where it forms part of the central protuberance. In Psychromonas ingrahamii (strain DSM 17664 / CCUG 51855 / 37), this protein is Large ribosomal subunit protein bL25.